The following is a 118-amino-acid chain: MNKEQILEAIKAMTVLELNDLVKAIEEEFGVTAAAPVVAGGAAAAAEEKTEFDVVLASAGAEKIKVIKVVREITGLGLKEAKEVVDNAPKALKEGVSKDEAEEIKAKLEEVGASVEVK.

M1 is modified (N-acetylmethionine; in form MA2).

Belongs to the bacterial ribosomal protein bL12 family. Homodimer. Part of the ribosomal stalk of the 50S ribosomal subunit. Forms a multimeric L10(L12)X complex, where L10 forms an elongated spine to which 2 to 4 L12 dimers bind in a sequential fashion. Binds GTP-bound translation factors. Post-translationally, acetylation of Met-1 converts MA1 to MA2.

In terms of biological role, forms part of the ribosomal stalk which helps the ribosome interact with GTP-bound translation factors. Is thus essential for accurate translation. In Micrococcus luteus (Micrococcus lysodeikticus), this protein is Large ribosomal subunit protein bL12.